Reading from the N-terminus, the 40-residue chain is Small polypeptide DEVIL 3 (40 aa).

Positions 9 to 40 (PCNKKLGGYLKEQKGRLYIIRRCVVMLICWHD) are required for DVL/RTFL small polypeptide activity. The chain crosses the membrane as a helical span at residues 12–28 (KKLGGYLKEQKGRLYII).

The protein belongs to the DVL/RTFL small polypeptides family. In terms of tissue distribution, mostly expressed in flowers and stems, and, to a lower extent, in roots and leaves.

The protein resides in the cell membrane. Small polypeptide acting as a regulatory molecule which coordinates cellular responses required for differentiation, growth and development, including leaves shape, pedicule elongation, inflorescence organization and fruit maturation, probably by restricting polar cell proliferation in lateral organs and coordinating socket cell recruitment and differentiation at trichome sites. This is Small polypeptide DEVIL 3 from Arabidopsis thaliana (Mouse-ear cress).